A 548-amino-acid chain; its full sequence is Probable 2,3-bisphosphoglycerate-independent phosphoglycerate mutase (548 aa).

Asp-20 and Ser-73 together coordinate Mn(2+). The active-site Phosphoserine intermediate is Ser-73. Residues His-134, 164–165 (RD), Arg-200, Arg-207, 279–282 (RGDR), and Lys-354 each bind substrate. Mn(2+)-binding residues include Asp-422, His-426, Asp-463, His-464, and His-493.

This sequence belongs to the BPG-independent phosphoglycerate mutase family. Monomer. Mn(2+) serves as cofactor.

It carries out the reaction (2R)-2-phosphoglycerate = (2R)-3-phosphoglycerate. It participates in carbohydrate degradation; glycolysis; pyruvate from D-glyceraldehyde 3-phosphate: step 3/5. Catalyzes the interconversion of 2-phosphoglycerate and 3-phosphoglycerate. The chain is Probable 2,3-bisphosphoglycerate-independent phosphoglycerate mutase (gpmI) from Leptospira interrogans serogroup Icterohaemorrhagiae serovar Lai (strain 56601).